A 508-amino-acid polypeptide reads, in one-letter code: 2'-5'-oligoadenylate synthase-like protein 2 (508 aa).

Ser-69 serves as a coordination point for ATP. Mg(2+)-binding residues include Asp-81, Asp-83, and Asp-154. ATP contacts are provided by Arg-213 and Lys-216. The region spanning 435–473 (ILVFVKYPGGQSKPFTIDPDDTILDLKEKIEDAGGPCAE) is the Ubiquitin-like domain.

Belongs to the 2-5A synthase family. Mg(2+) serves as cofactor. As to expression, strongly expressed in spleen dendritic cells, whereas, in bone marrow-derived dendritic cells, the amount increases during the maturation process. Expressed in many organs, the highest levels being in thymus, lung, and bone marrow.

It carries out the reaction 3 ATP = 5'-triphosphoadenylyl-(2'-&gt;5')-adenylyl-(2'-&gt;5')-adenosine + 2 diphosphate. Its activity is regulated as follows. Produced as a latent enzyme which is activated by dsRNA generated during the course of viral infection. The dsRNA activator must be at least 15 nucleotides long, and no modification of the 2'-hydroxyl group is tolerated. ssRNA or dsDNA do not act as activators. Interferon-induced, dsRNA-activated antiviral enzyme which plays a critical role in cellular innate antiviral response. Synthesizes oligomers of 2'-5'-oligoadenylates (2-5A) from ATP which then bind to the inactive monomeric form of ribonuclease L (RNase L) leading to its dimerization and subsequent activation. Activation of RNase L leads to degradation of cellular as well as viral RNA, resulting in the inhibition of protein synthesis, thus terminating viral replication. Can mediate the antiviral effect via the classical RNase L-dependent pathway or an alternative antiviral pathway independent of RNase L. The protein is 2'-5'-oligoadenylate synthase-like protein 2 (Oasl2) of Mus musculus (Mouse).